The following is a 1236-amino-acid chain: ATP-dependent helicase/nuclease subunit A (1236 aa).

The 470-residue stretch at 4-473 folds into the UvrD-like helicase ATP-binding domain; sequence VKWTKEQQQA…VNLFKNFRSR (470 aa). 25 to 32 contacts ATP; the sequence is AAAGSGKT. Residues 512 to 806 form the UvrD-like helicase C-terminal domain; sequence YEDKSLVGGP…RIMSIHKSKG (295 aa).

It belongs to the helicase family. AddA subfamily. As to quaternary structure, heterodimer of AddA and AddB/RexB. Mg(2+) is required as a cofactor.

The catalysed reaction is Couples ATP hydrolysis with the unwinding of duplex DNA by translocating in the 3'-5' direction.. The enzyme catalyses ATP + H2O = ADP + phosphate + H(+). Functionally, the heterodimer acts as both an ATP-dependent DNA helicase and an ATP-dependent, dual-direction single-stranded exonuclease. Recognizes the chi site generating a DNA molecule suitable for the initiation of homologous recombination. The AddA nuclease domain is required for chi fragment generation; this subunit has the helicase and 3' -&gt; 5' nuclease activities. The sequence is that of ATP-dependent helicase/nuclease subunit A from Clostridium novyi (strain NT).